Consider the following 753-residue polypeptide: CCR4-NOT transcription complex subunit 3 (753 aa).

Residues 240 to 534 (ATSPPSHSHM…PPQFSTAPEI (295 aa)) form a disordered region. The segment covering 257–268 (SSSTPTSTTSSS) has biased composition (low complexity). Positions 284–293 (DDKKRGRSTD) are enriched in basic and acidic residues. Residue Thr-292 is modified to Phosphothreonine. A compositionally biased stretch (polar residues) spans 294-315 (SEVSQSPAKNGSKPVHSNQHPQ). Ser-299 carries the phosphoserine modification. The span at 317-330 (PAVPPTYPSGPPPA) shows a compositional bias: pro residues. A compositionally biased stretch (low complexity) spans 350-376 (PSALGPKASPAPSHNSGTPAPYAQAVA). Positions 396-408 (SGGGGGGSGGGGS) are enriched in gly residues. A compositionally biased stretch (polar residues) spans 424-433 (NGATSYSSVV). A compositionally biased stretch (low complexity) spans 441–457 (ALSSSGGNNASSQALGP). Positions 458 to 467 (PSGPHNPPPS) are enriched in pro residues. A compositionally biased stretch (gly residues) spans 479 to 491 (GAGGVAPGSGNNS). Ser-542 is modified (phosphoserine). A repressor domain region spans residues 661–753 (EFYQRLSTET…YRYLEDRDLQ (93 aa)).

The protein belongs to the CNOT2/3/5 family. Component of the CCR4-NOT complex; distinct complexes seem to exist that differ in the participation of probably mutually exclusive catalytic subunits. In the complex interacts directly with CNOT2. Interacts with TIP120B and NANOS2. Interacts with EBF1. Interacts in an RNA-independent manner with BICC1 (via KH domains). Ubiquitous. Highly expressed in brain, heart, thymus, spleen, kidney, liver, small intestine, lung and peripheral blood leukocytes.

The protein resides in the cytoplasm. The protein localises to the nucleus. It is found in the P-body. Its function is as follows. Component of the CCR4-NOT complex which is one of the major cellular mRNA deadenylases and is linked to various cellular processes including bulk mRNA degradation, miRNA-mediated repression, translational repression during translational initiation and general transcription regulation. Additional complex functions may be a consequence of its influence on mRNA expression. May be involved in metabolic regulation; may be involved in recruitment of the CCR4-NOT complex to deadenylation target mRNAs involved in energy metabolism. Involved in mitotic progression and regulation of the spindle assembly checkpoint by regulating the stability of MAD1L1 mRNA. Can repress transcription and may link the CCR4-NOT complex to transcriptional regulation; the repressive function may involve histone deacetylases. Involved in the maintenance of embryonic stem (ES) cell identity. In Homo sapiens (Human), this protein is CCR4-NOT transcription complex subunit 3.